Consider the following 373-residue polypeptide: Chaperone protein DnaJ (373 aa).

One can recognise a J domain in the interval D4 to G68. The segment at G142–T224 adopts a CR-type zinc-finger fold. The Zn(2+) site is built by C155, C158, C172, C175, C198, C201, C212, and C215. CXXCXGXG motif repeat units lie at residues C155 to G162, C172 to G179, C198 to G205, and C212 to T219.

Belongs to the DnaJ family. Homodimer. The cofactor is Zn(2+).

It is found in the cytoplasm. Functionally, participates actively in the response to hyperosmotic and heat shock by preventing the aggregation of stress-denatured proteins and by disaggregating proteins, also in an autonomous, DnaK-independent fashion. Unfolded proteins bind initially to DnaJ; upon interaction with the DnaJ-bound protein, DnaK hydrolyzes its bound ATP, resulting in the formation of a stable complex. GrpE releases ADP from DnaK; ATP binding to DnaK triggers the release of the substrate protein, thus completing the reaction cycle. Several rounds of ATP-dependent interactions between DnaJ, DnaK and GrpE are required for fully efficient folding. Also involved, together with DnaK and GrpE, in the DNA replication of plasmids through activation of initiation proteins. The sequence is that of Chaperone protein DnaJ from Mycoplasma mobile (strain ATCC 43663 / 163K / NCTC 11711) (Mesomycoplasma mobile).